The chain runs to 403 residues: Para-nitrophenol 4-monooxygenase (403 aa).

FAD contacts are provided by residues 6–35 (GVVV…VLEA) and 279–289 (FRRGRVVLAGD).

The protein belongs to the PheA/TfdB FAD monooxygenase family. In terms of assembly, monomer. Requires FAD as cofactor.

It carries out the reaction 4-nitrophenol + NADPH + O2 + H(+) = 1,4-benzoquinone + nitrite + NADP(+) + H2O. The protein operates within xenobiotic degradation; 4-nitrophenol degradation. Involved in the degradation of para-nitrophenol (4-NP). Catalyzes oxidation of 4-nitrophenol (4-NP) at position 4 with concomitant removal of the nitro group as nitrite and production of para-benzoquinone. In Pseudomonas sp. (strain WBC-3), this protein is Para-nitrophenol 4-monooxygenase (pnpA).